The chain runs to 210 residues: Outer-membrane lipoprotein carrier protein (210 aa).

Residues 1–26 (MHMIRRAAGALAVFAVAALAAAPAWA) form the signal peptide.

The protein belongs to the LolA family. As to quaternary structure, monomer.

The protein resides in the periplasm. Its function is as follows. Participates in the translocation of lipoproteins from the inner membrane to the outer membrane. Only forms a complex with a lipoprotein if the residue after the N-terminal Cys is not an aspartate (The Asp acts as a targeting signal to indicate that the lipoprotein should stay in the inner membrane). The chain is Outer-membrane lipoprotein carrier protein from Bordetella pertussis (strain Tohama I / ATCC BAA-589 / NCTC 13251).